Here is a 947-residue protein sequence, read N- to C-terminus: Bifunctional glutamine synthetase adenylyltransferase/adenylyl-removing enzyme (947 aa).

Residues 1 to 440 (MTPLSSPLSQ…VFNELIGDDE (440 aa)) are adenylyl removase. Residues 450–947 (SEPWREVWQD…ASWRKWLVAV (498 aa)) are adenylyl transferase.

Belongs to the GlnE family. Requires Mg(2+) as cofactor.

The enzyme catalyses [glutamine synthetase]-O(4)-(5'-adenylyl)-L-tyrosine + phosphate = [glutamine synthetase]-L-tyrosine + ADP. It catalyses the reaction [glutamine synthetase]-L-tyrosine + ATP = [glutamine synthetase]-O(4)-(5'-adenylyl)-L-tyrosine + diphosphate. In terms of biological role, involved in the regulation of glutamine synthetase GlnA, a key enzyme in the process to assimilate ammonia. When cellular nitrogen levels are high, the C-terminal adenylyl transferase (AT) inactivates GlnA by covalent transfer of an adenylyl group from ATP to specific tyrosine residue of GlnA, thus reducing its activity. Conversely, when nitrogen levels are low, the N-terminal adenylyl removase (AR) activates GlnA by removing the adenylyl group by phosphorolysis, increasing its activity. The regulatory region of GlnE binds the signal transduction protein PII (GlnB) which indicates the nitrogen status of the cell. The sequence is that of Bifunctional glutamine synthetase adenylyltransferase/adenylyl-removing enzyme from Salmonella agona (strain SL483).